We begin with the raw amino-acid sequence, 402 residues long: GTPase Obg (402 aa).

One can recognise an Obg domain in the interval 1-159; that stretch reads MRFIDEAIVT…KELKFELKVV (159 aa). An OBG-type G domain is found at 160–334; sequence ADVGLIGLPN…VKYHLMNEIE (175 aa). GTP contacts are provided by residues 166–173, 191–195, 213–216, 283–286, and 315–317; these read GLPNAGKS, FTTLV, DIPG, NKID, and STL. Residues Ser-173 and Thr-193 each coordinate Mg(2+). A disordered region spans residues 382–402; that stretch reads AAFNNELDDDDDDGVEVVYAP. Positions 387-396 are enriched in acidic residues; the sequence is ELDDDDDDGV.

Belongs to the TRAFAC class OBG-HflX-like GTPase superfamily. OBG GTPase family. As to quaternary structure, monomer. Mg(2+) serves as cofactor.

Its subcellular location is the cytoplasm. An essential GTPase which binds GTP, GDP and possibly (p)ppGpp with moderate affinity, with high nucleotide exchange rates and a fairly low GTP hydrolysis rate. Plays a role in control of the cell cycle, stress response, ribosome biogenesis and in those bacteria that undergo differentiation, in morphogenesis control. The chain is GTPase Obg from Psychrobacter sp. (strain PRwf-1).